We begin with the raw amino-acid sequence, 276 residues long: uncharacterized protein (276 aa).

The first 19 residues, 1-19 (MKKWLICSFVLVLLVSFTA), serve as a signal peptide directing secretion. Cys-20 carries N-palmitoyl cysteine lipidation. Cys-20 carries S-diacylglycerol cysteine lipidation.

It belongs to the NlpA lipoprotein family.

The protein localises to the cell membrane. This is an uncharacterized protein from Bacillus subtilis (strain 168).